Here is a 1893-residue protein sequence, read N- to C-terminus: Transcription initiation factor TFIID subunit 1 (1893 aa).

Positions 1–435 constitute a Protein kinase 1 domain; that stretch reads MGPGCDLLLR…VTQLHWEDDI (435 aa). S137 carries the post-translational modification Phosphoserine; by autocatalysis. 2 disordered regions span residues 155-184 and 197-224; these read LMPP…NGEG and ASEK…AESE. Residues 156–165 show a composition bias toward pro residues; it reads MPPPPPPPGP. Low complexity predominate over residues 197–208; it reads ASEKVDFSSSSD. Residue S328 is modified to Phosphoserine; by autocatalysis. Residues 534 to 557 form a disordered region; the sequence is IPDEKEEATSNSPSKESKKESSLK. Residues 538–997 form a histone acetyltransferase (HAT) region; sequence KEEATSNSPS…KIPNKPTQQK (460 aa). Residue K565 is modified to N6-acetyllysine. Residues K570 and K583 each participate in a glycyl lysine isopeptide (Lys-Gly) (interchain with G-Cter in SUMO2) cross-link. Disordered regions lie at residues 990–1009, 1128–1148, 1158–1177, and 1254–1278; these read PNKP…KKTV, MLQN…QERK, GSAA…VTSL, and RLKR…MKER. 2 stretches are compositionally biased toward basic and acidic residues: residues 995 to 1004 and 1139 to 1148; these read QQKDDKEPQP and SREREEQERK. Residues 1216 to 1294 constitute a DNA-binding region (HMG box; involved in promoter binding); it reads VRIRTTKDEE…CGACGAIGHM (79 aa). The segment covering 1254-1270 has biased composition (basic and acidic residues); the sequence is RLKRNQEKEKLKGPPEK. Residues 1363–1650 are interaction with ASF1A and ASF1B; the sequence is VLKFPKQQLP…TAKEAALEEA (288 aa). A Nuclear localization signal motif is present at residues 1372–1379; the sequence is PPKKKRRV. Bromo domains are found at residues 1397–1505 and 1519–1628; these read RRRT…LKEK and LLDD…LTEY. Residues 1446 to 1893 form the Protein kinase 2 domain; the sequence is MDLQTLRENV…AGDSDLDSDE (448 aa). Residues 1651–1676 form a disordered region; that stretch reads ELESLDPMTPGPYTPQPPDLYDTNTS. Positions 1659–1668 are enriched in pro residues; sequence TPGPYTPQPP. Phosphoserine is present on residues S1690, S1693, A1718, E1721, and G1723. A disordered region spans residues 1696–1893; the sequence is DIPSATPEKQ…AGDSDLDSDE (198 aa). 2 stretches are compositionally biased toward acidic residues: residues 1709 to 1723 and 1741 to 1756; these read EGED…EEEG and EGED…EEGD. A phosphoserine mark is found at S1799, S1802, and S1820. The segment covering 1830-1840 has biased composition (polar residues); sequence KSNTQDTSFSS. Positions 1846–1857 are enriched in acidic residues; the sequence is VSEEEEDEEEEE. S1847 bears the Phosphoserine mark. Positions 1860–1869 are enriched in polar residues; the sequence is SGPSVLSQVH.

Belongs to the TAF1 family. In terms of assembly, component of the TFIID basal transcription factor complex, composed of TATA-box-binding protein TBP, and a number of TBP-associated factors (TAFs), including TAF1, TAF2, TAF3, TAF4, TAF5, TAF6, TAF7, TAF8, TAF9, TAF10, TAF11, TAF12 and TAF13. Interacts with TAF7; the interaction is direct. TAF1, when part of the TFIID complex, interacts with C-terminus of TP53. Part of a TFIID-containing RNA polymerase II pre-initiation complex that is composed of TBP and at least GTF2A1, GTF2A2, GTF2E1, GTF2E2, GTF2F1, GTF2H2, GTF2H3, GTF2H4, GTF2H5, GTF2B, TCEA1, ERCC2, ERCC3, TAF1, TAF2, TAF3, TAF4, TAF5, TAF6, TAF7, TAF8, TAF9, TAF10, TAF11, TAF12 and TAF13. Component of some MLL1/MLL complex, at least composed of the core components KMT2A/MLL1, ASH2L, HCFC1/HCF1, WDR5 and RBBP5, as well as the facultative components BACC1, CHD8, E2F6, HSP70, INO80C, KANSL1, LAS1L, MAX, MCRS1, MGA, KAT8/MOF, PELP1, PHF20, PRP31, RING2, RUVB1/TIP49A, RUVB2/TIP49B, SENP3, TAF1, TAF4, TAF6, TAF7, TAF9 and TEX10. RB1 interacts with the N-terminal domain of TAF1. Interacts with ASF1A and ASF1B. Interacts (via bromo domains) with acetylated lysine residues on the N-terminus of histone H1.4, H2A, H2B, H3 and H4 (in vitro). As to quaternary structure, (Microbial infection) Interacts with SV40 Large T antigen. (Microbial infection) Interacts with herpes simplex virus 1 ICP4. Requires Mg(2+) as cofactor. Phosphorylated by casein kinase II in vitro.

It is found in the nucleus. The catalysed reaction is L-seryl-[protein] + ATP = O-phospho-L-seryl-[protein] + ADP + H(+). The enzyme catalyses L-threonyl-[protein] + ATP = O-phospho-L-threonyl-[protein] + ADP + H(+). It catalyses the reaction L-lysyl-[protein] + acetyl-CoA = N(6)-acetyl-L-lysyl-[protein] + CoA + H(+). Autophosphorylates on Ser residues. Inhibited by retinoblastoma tumor suppressor protein, RB1. Binding to TAF7 or CIITA inhibits the histone acetyltransferase activity. Functionally, the TFIID basal transcription factor complex plays a major role in the initiation of RNA polymerase II (Pol II)-dependent transcription. TFIID recognizes and binds promoters with or without a TATA box via its subunit TBP, a TATA-box-binding protein, and promotes assembly of the pre-initiation complex (PIC). The TFIID complex consists of TBP and TBP-associated factors (TAFs), including TAF1, TAF2, TAF3, TAF4, TAF5, TAF6, TAF7, TAF8, TAF9, TAF10, TAF11, TAF12 and TAF13. TAF1 is the largest component and core scaffold of the TFIID complex, involved in nucleating complex assembly. TAF1 forms a promoter DNA binding subcomplex of TFIID, together with TAF7 and TAF2. Contains novel N- and C-terminal Ser/Thr kinase domains which can autophosphorylate or transphosphorylate other transcription factors. Phosphorylates TP53 on 'Thr-55' which leads to MDM2-mediated degradation of TP53. Phosphorylates GTF2A1 and GTF2F1 on Ser residues. Possesses DNA-binding activity. Essential for progression of the G1 phase of the cell cycle. Exhibits histone acetyltransferase activity towards histones H3 and H4. This Homo sapiens (Human) protein is Transcription initiation factor TFIID subunit 1.